We begin with the raw amino-acid sequence, 1028 residues long: Multidrug resistance protein MdtC (1028 aa).

The next 12 membrane-spanning stretches (helical) occupy residues 3 to 23, 333 to 353, 360 to 380, 387 to 407, 431 to 451, 463 to 483, 528 to 548, 853 to 873, 875 to 895, 897 to 917, 953 to 973, and 984 to 1004; these read FFAL…AITL, EVEQ…FLFL, LIPA…MYLC, LSLM…IVVL, VGFT…PLLL, FAVT…TLTP, LVGV…ISIP, VILI…LYES, VHPL…LLAL, LFNA…IGIV, PIMM…ISGG, and ITIV…TPVV.

Belongs to the resistance-nodulation-cell division (RND) (TC 2.A.6) family. MdtC subfamily. As to quaternary structure, part of a tripartite efflux system composed of MdtA, MdtB and MdtC. MdtC forms a heteromultimer with MdtB.

The protein resides in the cell inner membrane. The chain is Multidrug resistance protein MdtC from Citrobacter koseri (strain ATCC BAA-895 / CDC 4225-83 / SGSC4696).